Consider the following 206-residue polypeptide: GTP-binding protein YPT1 (206 aa).

Met1 is subject to N-acetylmethionine. Residues 17–23, 33–40, Gly66, and 121–124 contribute to the GTP site; these read SGVGKSC, YTNDYIST, and NKCD. Residue Cys23 is the site of S-palmitoyl cysteine attachment. The Effector region signature appears at 37-45; sequence YISTIGVDF. The interaction with GDI1 stretch occupies residues 63-80; that stretch reads DTAGQERFRTITSSYYRG. The S-palmitoyl cysteine moiety is linked to residue Cys123. Lys144 participates in a covalent cross-link: Glycyl lysine isopeptide (Lys-Gly) (interchain with G-Cter in ubiquitin). Residue 152 to 153 participates in GTP binding; that stretch reads AL. Ser172 and Ser174 each carry phosphoserine. The tract at residues 173–206 is disordered; it reads MSQQNLNETTQKKEDKGNVNLKGQSLTNTGGGCC. The interaction with GDI1 stretch occupies residues 189–195; that stretch reads GNVNLKG. Residues Cys205 and Cys206 are each lipidated (S-geranylgeranyl cysteine).

The protein belongs to the small GTPase superfamily. Rab family. Forms a complex with the Rab escort protein (REP) MRS6, which is recognized by Rab geranylgeranyltransferase BET2-BET4. Interacts with the Rab GDP dissociation inhibitor GDI1, which can retrieve from and deliver to membranes the GDP-bound and prenylated form of YPT1. Interacts with YIP1, which is required for proper membrane targeting of prenylated YPT1. Interacts with YIF1, YIP3, YIP4 and YIP5. In terms of processing, prenylation is required for interaction with GDI1 and YIP1.

The protein localises to the endoplasmic reticulum membrane. It localises to the golgi apparatus membrane. The protein resides in the cytoplasm. It is found in the preautophagosomal structure membrane. With respect to regulation, rab activation is generally mediated by a guanine exchange factor (GEF), while inactivation through hydrolysis of bound GTP is catalyzed by a GTPase activating protein (GAP). YPT1 is activated by the GEFs DSS4 and TRAPP complex, and inactivated by GAPs GYP1, GYP5 and GYP8. The small GTPases Rab are key regulators of intracellular membrane trafficking, from the formation of transport vesicles to their fusion with membranes. Rabs cycle between an inactive GDP-bound form and an active GTP-bound form that is able to recruit to membranes different set of downstream effectors directly responsible for vesicle formation, movement, tethering and fusion. YPT1 regulates the trafficking of secretory vesicles from the endoplasmic reticulum (ER) to the Golgi. Vesicular transport depends on shuttling of YPT1 between membrane and cytosol by GDI1, probably by recycling it to its membrane of origin after a vesicle fusion event. Plays a role in the initial events of the autophagic vacuole development which take place at specialized regions of the endoplasmic reticulum. Also involved in the recycling of membrane proteins. In Saccharomyces cerevisiae (strain ATCC 204508 / S288c) (Baker's yeast), this protein is GTP-binding protein YPT1 (YPT1).